We begin with the raw amino-acid sequence, 160 residues long: uncharacterized protein (160 aa).

The first 27 residues, M1–A27, serve as a signal peptide directing secretion.

This is an uncharacterized protein from Aquifex aeolicus (strain VF5).